Here is a 153-residue protein sequence, read N- to C-terminus: Small ribosomal subunit protein uS12m (153 aa).

Residues 1–20 (MLSRFMSNTWCTPLRQAQRL) constitute a mitochondrion transit peptide.

The protein belongs to the universal ribosomal protein uS12 family. Component of the mitochondrial small ribosomal subunit (mt-SSU). Mature yeast 74S mitochondrial ribosomes consist of a small (37S) and a large (54S) subunit. The 37S small subunit contains a 15S ribosomal RNA (15S mt-rRNA) and 34 different proteins. The 54S large subunit contains a 21S rRNA (21S mt-rRNA) and 46 different proteins. uS12m forms part of the decoding center of the mt-SSU.

The protein resides in the mitochondrion. In terms of biological role, component of the mitochondrial ribosome (mitoribosome), a dedicated translation machinery responsible for the synthesis of mitochondrial genome-encoded proteins, including at least some of the essential transmembrane subunits of the mitochondrial respiratory chain. The mitoribosomes are attached to the mitochondrial inner membrane and translation products are cotranslationally integrated into the membrane. uS12m is required for respiratory growth. This chain is Small ribosomal subunit protein uS12m (MRPS12), found in Saccharomyces cerevisiae (strain ATCC 204508 / S288c) (Baker's yeast).